Consider the following 223-residue polypeptide: Phosphoribosylformylglycinamidine synthase subunit PurQ (223 aa).

The region spanning 2–223 (KFAVLKFPGS…MVNSWREQNV (222 aa)) is the Glutamine amidotransferase type-1 domain. Residue Cys85 is the Nucleophile of the active site. Active-site residues include His193 and Glu195.

Part of the FGAM synthase complex composed of 1 PurL, 1 PurQ and 2 PurS subunits.

The protein resides in the cytoplasm. It carries out the reaction N(2)-formyl-N(1)-(5-phospho-beta-D-ribosyl)glycinamide + L-glutamine + ATP + H2O = 2-formamido-N(1)-(5-O-phospho-beta-D-ribosyl)acetamidine + L-glutamate + ADP + phosphate + H(+). The enzyme catalyses L-glutamine + H2O = L-glutamate + NH4(+). It participates in purine metabolism; IMP biosynthesis via de novo pathway; 5-amino-1-(5-phospho-D-ribosyl)imidazole from N(2)-formyl-N(1)-(5-phospho-D-ribosyl)glycinamide: step 1/2. Functionally, part of the phosphoribosylformylglycinamidine synthase complex involved in the purines biosynthetic pathway. Catalyzes the ATP-dependent conversion of formylglycinamide ribonucleotide (FGAR) and glutamine to yield formylglycinamidine ribonucleotide (FGAM) and glutamate. The FGAM synthase complex is composed of three subunits. PurQ produces an ammonia molecule by converting glutamine to glutamate. PurL transfers the ammonia molecule to FGAR to form FGAM in an ATP-dependent manner. PurS interacts with PurQ and PurL and is thought to assist in the transfer of the ammonia molecule from PurQ to PurL. This chain is Phosphoribosylformylglycinamidine synthase subunit PurQ, found in Staphylococcus saprophyticus subsp. saprophyticus (strain ATCC 15305 / DSM 20229 / NCIMB 8711 / NCTC 7292 / S-41).